The primary structure comprises 599 residues: RING finger protein unkempt (599 aa).

C3H1-type zinc fingers lie at residues 71-100, 111-141, 194-220, 230-264, and 272-300; these read YSADNYCTKYDETTGICPEGDECPYLHRTA, YYKTCMCVHDTDSRGYCVKNGLHCAFAHGMQ, NYKTEPCKRPPRLCRQGYACPQYHNSK, KYRSTPCPNVKHGEEWGEPGNCEAGDNCQYCHTRT, and IYKSTKCNDVQQAGYCPRSVFCAFAHVEP. Residue serine 411 is modified to Phosphoserine. An RING-type zinc finger spans residues 556-591; it reads CMKCEENNRTVTLEPCNHLSICNTCAESVTECPYCQ.

This sequence belongs to the unkempt family. Ubiquitous in most somatic tissues from syncytial embryo through to embryo stage 15. Expression becomes restricted predominantly to the CNS at stages 16 and 17.

The protein resides in the cytoplasm. Functionally, essential for late larval/early pupal development. This chain is RING finger protein unkempt (unk), found in Drosophila melanogaster (Fruit fly).